The primary structure comprises 270 residues: MRNGVVLFGLFFIGYSSCVLASLVEKSDVESTHAEQWDSNGKRTLQADDPERILAEERNMEQALLPAAEAIGKIKVSEKAVPRASLGSTLNPMKWPKRILDKVRLWLARIRLNLLKRTTVGEDSIDRAMMNGLTPFYLKKIKNDIMHYSSSVPHDKIKIEEDYDFYVKHFFGQFKGLYKDPPVFAVDKWNKLEEGMTKAEQNGNRRASDKVSRNIDKGLSIDQLFSLDISPFVYMRLLEKRGVFKDVENNMDKIDHLKDYVKVYKEHLMA.

The first 21 residues, Met-1–Ala-21, serve as a signal peptide directing secretion. The RxLR-dEER motif lies at Arg-43 to Arg-58.

This sequence belongs to the RxLR effector family.

Its subcellular location is the secreted. It localises to the host nucleus. The protein resides in the host cytoplasm. In terms of biological role, secreted effector that completely suppresses the host cell death induced by cell death-inducing proteins. The polypeptide is Secreted RxLR effector protein 149 (Plasmopara viticola (Downy mildew of grapevine)).